The primary structure comprises 126 residues: C-type natriuretic peptide 2 (126 aa).

A signal peptide spans 1–22; the sequence is MAVCSSSSLILLTVFLSVAVET. A propeptide spanning residues 23–102 is cleaved from the precursor; it reads RPSSDRDEEQ…REKTRRWGRK (80 aa). Residues 44–80 form a disordered region; it reads SLILAPPTSNDSTEGSSGSPEPPTPSEAPVLIHGDRG. Cysteine 110 and cysteine 126 form a disulfide bridge.

Belongs to the natriuretic peptide family. Brain and spinal cord.

The protein localises to the secreted. In terms of biological role, exhibits natriuretic and vasodepressant activity. Has cGMP-stimulating activity. May help to regulate body fluid homeostasis in a variety of aquatic environments. In Oryzias latipes (Japanese rice fish), this protein is C-type natriuretic peptide 2.